Reading from the N-terminus, the 478-residue chain is MIQVLLVTICLAAFPYQGSSIILESGNVNDYEVIYPRKVTALPKGAVQPKYEDTMQYELKVNGEPVVLHLEKNKGLFSKDYSETHYSFDGRKITTNPSVEDHCYYHGRIENDADSTASISACNGLKGHFKLQGEMYLIEPLKLSDSEAHAVFKLKNVEKEDEAPKMCGVTQNWESYEPIKKASDLNLNPEHQRYVELFIVVDHGMYTKYNGDSDKIRQRVHQMVNIMKESYTYMYIDILLAGIEIWSNGDLINVQPASPNTLNSFGEWRETDLLKRKSHDNAQLLTSIAFDEQIIGRAYIGGICDPKRSTGVVQDHSEINLRVAVTMTHELGHNLGIHHDTDSCSCGGYSCIMSPVISDEPSKYFSDCSYIQCWEFIMNQKPQCILKKPLRTDTVSTPVSGNELLEAGIECDCGSLENPCCYATTCKMRPGSQCAEGLCCDQCRFMKKGTVCRVSMVDRNDDTCTGQSADCPRNGLYG.

The signal sequence occupies residues 1 to 20 (MIQVLLVTICLAAFPYQGSS). Residues 21 to 187 (IILESGNVND…PIKKASDLNL (167 aa)) constitute a propeptide that is removed on maturation. The Peptidase M12B domain occupies 193 to 389 (RYVELFIVVD…QKPQCILKKP (197 aa)). 3 disulfide bridges follow: Cys304/Cys384, Cys344/Cys368, and Cys346/Cys351. Residue His329 coordinates Zn(2+). Glu330 is a catalytic residue. His333 and His339 together coordinate Zn(2+). A propeptide spanning residues 390-407 (LRTDTVSTPVSGNELLEA) is cleaved from the precursor. The 82-residue stretch at 397–478 (TPVSGNELLE…ADCPRNGLYG (82 aa)) folds into the Disintegrin domain. Cystine bridges form between Cys411-Cys426, Cys413-Cys421, Cys420-Cys443, Cys434-Cys440, Cys439-Cys464, and Cys452-Cys471. Positions 456-458 (MVD) match the Cell attachment site; atypical (MVD) motif.

Belongs to the venom metalloproteinase (M12B) family. P-II subfamily. P-IIa sub-subfamily. Monomer (disintegrin). It depends on Zn(2+) as a cofactor. Expressed by the venom gland.

The protein resides in the secreted. It catalyses the reaction Cleavage of 3-Asn-|-Gln-4, 9-Ser-|-His-10 and 14-Ala-|-Leu-15 bonds in insulin B chain and 14-Tyr-|-Gln-15 and 8-Thr-|-Ser-9 in A chain. Cleaves type IV collagen at 73-Ala-|-Gln-74 in alpha1-(IV) and at 7-Gly-|-Leu-8 in alpha2-(IV).. In terms of biological role, snake venom zinc metalloproteinase that causes hemorrhage by provoking the degradation of the sub-endothelial matrix proteins (fibronectin, laminin, type IV collagen, nidogen, and gelatins). Functionally, potent inhibitor of both collagen- (IC(50)=4 nM) and ADP-induced (IC(50)=8 nM) platelet aggregation. May act by binding to the platelet receptor GPIIb/GPIIIa (ITGA2B/ITGB3). The polypeptide is Zinc metalloproteinase/disintegrin (Crotalus atrox (Western diamondback rattlesnake)).